A 452-amino-acid polypeptide reads, in one-letter code: Neuromedin-K receptor (452 aa).

The Extracellular portion of the chain corresponds to 1 to 71; that stretch reads MASVPTGENW…TNQFVQPSWR (71 aa). 4 N-linked (GlcNAc...) asparagine glycosylation sites follow: asparagine 9, asparagine 23, asparagine 40, and asparagine 60. The helical transmembrane segment at 72-94 threads the bilayer; that stretch reads IALWSLAYGLVVAVAVFGNLIVI. Residues 95-104 are Cytoplasmic-facing; the sequence is WIILAHKRMR. The helical transmembrane segment at 105 to 126 threads the bilayer; it reads TVTNYFLVNLAFSDASVAAFNT. Residues 127 to 146 lie on the Extracellular side of the membrane; the sequence is LVNFIYGVHSEWYFGANYCR. Cysteines 145 and 220 form a disulfide. Residues 147–168 form a helical membrane-spanning segment; that stretch reads FQNFFPITAVFASIYSMTAIAV. The Cytoplasmic segment spans residues 169–188; sequence DRYMAIIDPLKPRLSATATK. Residues 189-209 traverse the membrane as a helical segment; the sequence is IVIGSIWILAFLLAFPQCLYS. The Extracellular segment spans residues 210 to 232; it reads KIKVMPGRTLCYVQWPEGPKQHF. A helical transmembrane segment spans residues 233-257; sequence TYHIIVIILVYCFPLLIMGVTYTIV. The Cytoplasmic portion of the chain corresponds to 258–286; the sequence is GITLWGGEIPGDTCDKYHEQLKAKRKVVK. Residues 287 to 308 form a helical membrane-spanning segment; that stretch reads MMIIVVVTFAICWLPYHVYFIL. The Extracellular segment spans residues 309–321; that stretch reads TAIYQQLNRWKYI. The helical transmembrane segment at 322–346 threads the bilayer; sequence QQVYLASFWLAMSSTMYNPIIYCCL. Residues 347–452 lie on the Cytoplasmic side of the membrane; sequence NKRFRAGFKR…SPYTSVDEYS (106 aa). The S-palmitoyl cysteine moiety is linked to residue cysteine 361. Positions 401 to 452 are disordered; the sequence is DPSEGDPAKSSRKKRAVPRDPSANGCSHREFKSASTTSSFISSPYTSVDEYS. Low complexity predominate over residues 433 to 452; sequence SASTTSSFISSPYTSVDEYS.

Belongs to the G-protein coupled receptor 1 family. In terms of processing, the anchoring of this receptor to the plasma membrane is probably mediated by the palmitoylation of a cysteine residue.

It localises to the cell membrane. Functionally, this is a receptor for the tachykinin neuropeptide neuromedin-K (neurokinin B). It is associated with G proteins that activate a phosphatidylinositol-calcium second messenger system. This chain is Neuromedin-K receptor (Tacr3), found in Mus musculus (Mouse).